The chain runs to 38 residues: Photosystem I reaction center subunit IX (38 aa).

A helical membrane pass occupies residues 4 to 24 (FLTAAPVVAAIWFTATAGILI).

Belongs to the PsaJ family.

It localises to the cellular thylakoid membrane. Functionally, may help in the organization of the PsaE and PsaF subunits. This is Photosystem I reaction center subunit IX from Synechococcus sp. (strain CC9605).